The chain runs to 337 residues: MDAFKTHLAIVASGAPLSREQARAAFDDLLSGEVTPIQAGAFLTALSVRGESEDEIVGAVSAMRARMLPVAAPEGAIDIVGTGGDHSGSYNVSTLAAILTAACGVPVAKHGNRAATSRSGAADVLAALGVKIGLPPEALARCLSEAGLCFMFAQTHHGAMRHVAPVRTELPFRTIFNMLGPLSNPAGVTAQVFGVSRPAWAEPLTRVLATLGSRRVWTVHGSDGLDEITTTGPTAVVALEDGAFRHFTLDPREVSLPLATLDDLRGGDPEHNAAALGAVLEGARNAYRDIAVLNAGAGLVVAGAAGSLAEGVARAQEAIDSGAARGTLARLVAVSNA.

Residues glycine 81, 84–85 (GD), serine 89, 91–94 (NVST), 109–117 (KHGNRAATS), and alanine 121 each bind 5-phospho-alpha-D-ribose 1-diphosphate. Glycine 81 lines the anthranilate pocket. Serine 93 contacts Mg(2+). Residue asparagine 112 participates in anthranilate binding. Position 167 (arginine 167) interacts with anthranilate. Residues aspartate 226 and glutamate 227 each contribute to the Mg(2+) site.

This sequence belongs to the anthranilate phosphoribosyltransferase family. Homodimer. Requires Mg(2+) as cofactor.

It catalyses the reaction N-(5-phospho-beta-D-ribosyl)anthranilate + diphosphate = 5-phospho-alpha-D-ribose 1-diphosphate + anthranilate. It participates in amino-acid biosynthesis; L-tryptophan biosynthesis; L-tryptophan from chorismate: step 2/5. Catalyzes the transfer of the phosphoribosyl group of 5-phosphorylribose-1-pyrophosphate (PRPP) to anthranilate to yield N-(5'-phosphoribosyl)-anthranilate (PRA). This chain is Anthranilate phosphoribosyltransferase, found in Methylorubrum extorquens (strain CM4 / NCIMB 13688) (Methylobacterium extorquens).